The primary structure comprises 215 residues: Nascent polypeptide-associated complex subunit alpha (215 aa).

Residues 1–81 (MPGEATETVP…SEKKARKAMS (81 aa)) are disordered. The segment covering 9-28 (VPATEQELPQPQAETGSGTE) has biased composition (polar residues). Residues 29–42 (SDSDESVPELEEQD) show a composition bias toward acidic residues. Serine 43 bears the Phosphoserine; by ILK1 mark. Low complexity predominate over residues 44-57 (TQATTQQAQLAAAA). Positions 69-80 (QSRSEKKARKAM) are required for DNA-binding. Residues 70–135 (SRSEKKARKA…AKIEDLSQQA (66 aa)) form the NAC-A/B domain. Residues 93 to 108 (RVTIRKSKNILFVITK) are RNA/DNA-binding. Serine 132 is modified (phosphoserine). Lysine 142 carries the N6-acetyllysine; alternate modification. Lysine 142 is covalently cross-linked (Glycyl lysine isopeptide (Lys-Gly) (interchain with G-Cter in SUMO2); alternate). Threonine 159 is modified (phosphothreonine; by GSK3-beta). At threonine 161 the chain carries Phosphothreonine. A phosphoserine mark is found at serine 166, serine 186, serine 191, and serine 203. In terms of domain architecture, UBA spans 176-213 (VEVKDIELVMSQANVSRAKAVRALKNNSNDIVNAIMEL).

The protein belongs to the NAC-alpha family. In terms of assembly, part of the nascent polypeptide-associated complex (NAC), which is a heterodimer of NACA and BTF3 (via NAC-A/B domains). NAC associates with ribosomes through the BTF3/NACB subunit and contacts the ribosomal protein L23, which is positioned near the exiting site. Both subunits can contact nascent polypeptide chains. NACA may also form homodimers, and only this form binds DNA. Interacts with TBP and JUN. In terms of processing, phosphorylation of Ser-43 by ILK during cell adhesion may promote nuclear localization. Phosphorylation of Thr-159 by GSK3B may promote proteasome mediated degradation.

It localises to the cytoplasm. The protein resides in the nucleus. In terms of biological role, prevents inappropriate targeting of non-secretory polypeptides to the endoplasmic reticulum (ER). Binds to nascent polypeptide chains as they emerge from the ribosome and blocks their interaction with the signal recognition particle (SRP), which normally targets nascent secretory peptides to the ER. Also reduces the inherent affinity of ribosomes for protein translocation sites in the ER membrane (M sites). May act as a specific coactivator for JUN, binding to DNA and stabilizing the interaction of JUN homodimers with target gene promoters. The sequence is that of Nascent polypeptide-associated complex subunit alpha (NACA) from Pongo abelii (Sumatran orangutan).